Consider the following 823-residue polypeptide: Axial budding pattern protein 2 (823 aa).

The N-terminal stretch at 1-22 (MTQLQISLLLTATISLLHLVVA) is a signal peptide. Residues 23–508 (TPYEAYPIGK…SHNKKAVAIA (486 aa)) are Extracellular-facing. 16 N-linked (GlcNAc...) asparagine glycosylation sites follow: N41, N50, N96, N117, N163, N260, N266, N304, N324, N359, N382, N389, N403, N447, N451, and N495. The segment at 447-467 (NHSANATSTRSSHHSTSTSSY) is disordered. Residues 449-467 (SANATSTRSSHHSTSTSSY) are compositionally biased toward low complexity. Residues 509–529 (CGVAIPLGVILVALICFLIFW) traverse the membrane as a helical segment. The Cytoplasmic segment spans residues 530 to 823 (RRRRENPDDE…DIHGRIPEML (294 aa)). Disordered regions lie at residues 539–576 (ENLP…ASSY) and 596–627 (HSAT…QSQS). Composition is skewed to polar residues over residues 552-566 (NPAN…TPLN) and 614-626 (SGMN…FQSQ). Phosphoserine is present on residues S642, S673, and S676. Disordered regions lie at residues 700-734 (PEKE…VTPS) and 751-771 (DSQS…SSDD). Over residues 709–724 (DVTMSSLDPWNSNISP) the composition is skewed to polar residues. Residues 760–769 (TPTTMSTSSS) are compositionally biased toward low complexity.

Interacts with BEM1, BUD3, BUD4, BUD5, CDC24 and CDC42. Post-translationally, O-glycosylated by PMT4 and N-glycosylated. O-glycosylation increases activity in daughter cells by enhancing stability and promoting localization to the plasma membrane. May also be O-glycosylated by PMT1 and PMT2.

It localises to the cell membrane. Required for haploid cells axial budding pattern. Acts as an anchor to help direct new growth components and/or polarity establishment components like the BUD5 GTP/GDP exchange factor to localize at the cortical axial budding site. Regulates septin organization in late G1 independently of its role in polarity-axis determination. The sequence is that of Axial budding pattern protein 2 (AXL2) from Saccharomyces cerevisiae (strain ATCC 204508 / S288c) (Baker's yeast).